Reading from the N-terminus, the 335-residue chain is Holliday junction branch migration complex subunit RuvB (335 aa).

The tract at residues 1 to 181 (MDRIVEIEKY…FGMQFRLEFY (181 aa)) is large ATPase domain (RuvB-L). Leucine 20 contributes to the ATP binding site. ADP contacts are provided by arginine 21, tyrosine 28, isoleucine 29, glycine 62, leucine 63, glycine 64, lysine 65, threonine 66, and threonine 67. ATP contacts are provided by residues 128–130 (EDY) and arginine 171. Residues tyrosine 181 and arginine 218 each contribute to the ADP site. Positions 182-252 (KDSELALILQ…RANEALNSLG (71 aa)) are small ATPAse domain (RuvB-S). The head domain (RuvB-H) stretch occupies residues 255–335 (ELGFDAMDLR…LNYEKTLFEE (81 aa)). DNA contacts are provided by arginine 309 and arginine 314.

This sequence belongs to the RuvB family. As to quaternary structure, homohexamer. Forms an RuvA(8)-RuvB(12)-Holliday junction (HJ) complex. HJ DNA is sandwiched between 2 RuvA tetramers; dsDNA enters through RuvA and exits via RuvB. An RuvB hexamer assembles on each DNA strand where it exits the tetramer. Each RuvB hexamer is contacted by two RuvA subunits (via domain III) on 2 adjacent RuvB subunits; this complex drives branch migration. In the full resolvosome a probable DNA-RuvA(4)-RuvB(12)-RuvC(2) complex forms which resolves the HJ.

It is found in the cytoplasm. The enzyme catalyses ATP + H2O = ADP + phosphate + H(+). Functionally, the RuvA-RuvB-RuvC complex processes Holliday junction (HJ) DNA during genetic recombination and DNA repair, while the RuvA-RuvB complex plays an important role in the rescue of blocked DNA replication forks via replication fork reversal (RFR). RuvA specifically binds to HJ cruciform DNA, conferring on it an open structure. The RuvB hexamer acts as an ATP-dependent pump, pulling dsDNA into and through the RuvAB complex. RuvB forms 2 homohexamers on either side of HJ DNA bound by 1 or 2 RuvA tetramers; 4 subunits per hexamer contact DNA at a time. Coordinated motions by a converter formed by DNA-disengaged RuvB subunits stimulates ATP hydrolysis and nucleotide exchange. Immobilization of the converter enables RuvB to convert the ATP-contained energy into a lever motion, pulling 2 nucleotides of DNA out of the RuvA tetramer per ATP hydrolyzed, thus driving DNA branch migration. The RuvB motors rotate together with the DNA substrate, which together with the progressing nucleotide cycle form the mechanistic basis for DNA recombination by continuous HJ branch migration. Branch migration allows RuvC to scan DNA until it finds its consensus sequence, where it cleaves and resolves cruciform DNA. The chain is Holliday junction branch migration complex subunit RuvB from Campylobacter jejuni subsp. jejuni serotype O:2 (strain ATCC 700819 / NCTC 11168).